We begin with the raw amino-acid sequence, 179 residues long: Probable splicing factor, arginine/serine-rich 6 (179 aa).

Residues 3 to 76 (AKVYVGGLPS…VRARVELSTG (74 aa)) form the RRM domain. Residues 75–179 (TGQRRGGGGR…RSRSRSASPH (105 aa)) are disordered. Residues 78–93 (RRGGGGRGGGFGGRGG) are compositionally biased toward gly residues. Basic and acidic residues predominate over residues 94 to 160 (GGRDRSPYRG…RSPQERDRSH (67 aa)). The segment covering 161 to 173 (SKSRSRSRSRSRS) has biased composition (basic residues).

This sequence belongs to the splicing factor SR family. Extensively phosphorylated on serine residues in the RS domain.

The protein resides in the nucleus. In terms of biological role, plays a functionally redundant role in shifting germ cell sexual differentiation in hermaprodites. Required for the development of somatic gonad structures and for progression from larval stage to adulthood. The protein is Probable splicing factor, arginine/serine-rich 6 (rsp-6) of Caenorhabditis elegans.